The chain runs to 401 residues: Argininosuccinate synthase (401 aa).

8 to 16 (AYSGGLDTS) contributes to the ATP binding site. Tyr-85 provides a ligand contact to L-citrulline. Gly-115 serves as a coordination point for ATP. Positions 117, 121, and 122 each coordinate L-aspartate. L-citrulline is bound at residue Asn-121. The L-citrulline site is built by Arg-125, Ser-173, Glu-258, and Tyr-270.

Belongs to the argininosuccinate synthase family. Type 1 subfamily. In terms of assembly, homotetramer.

It is found in the cytoplasm. The catalysed reaction is L-citrulline + L-aspartate + ATP = 2-(N(omega)-L-arginino)succinate + AMP + diphosphate + H(+). It participates in amino-acid biosynthesis; L-arginine biosynthesis; L-arginine from L-ornithine and carbamoyl phosphate: step 2/3. The sequence is that of Argininosuccinate synthase from Staphylococcus aureus (strain MRSA252).